A 332-amino-acid chain; its full sequence is L-lactate dehydrogenase (332 aa).

NAD(+) contacts are provided by residues 29-57 and Arg-99; that span reads GQVG…CADK. Substrate contacts are provided by Arg-106, Asn-138, and Arg-169. Asn-138 provides a ligand contact to NAD(+). His-193 acts as the Proton acceptor in catalysis. Residue Thr-248 participates in substrate binding.

It belongs to the LDH/MDH superfamily. LDH family. Homotetramer.

Its subcellular location is the cytoplasm. It catalyses the reaction (S)-lactate + NAD(+) = pyruvate + NADH + H(+). The protein operates within fermentation; pyruvate fermentation to lactate; (S)-lactate from pyruvate: step 1/1. The polypeptide is L-lactate dehydrogenase (Drosophila melanogaster (Fruit fly)).